Reading from the N-terminus, the 276-residue chain is Probable endonuclease 4 (276 aa).

Zn(2+) is bound by residues H66, H106, E141, D175, H178, H210, D223, H225, and E255.

The protein belongs to the AP endonuclease 2 family. It depends on Zn(2+) as a cofactor.

It catalyses the reaction Endonucleolytic cleavage to 5'-phosphooligonucleotide end-products.. Its function is as follows. Endonuclease IV plays a role in DNA repair. It cleaves phosphodiester bonds at apurinic or apyrimidinic (AP) sites, generating a 3'-hydroxyl group and a 5'-terminal sugar phosphate. The sequence is that of Probable endonuclease 4 from Heliobacterium modesticaldum (strain ATCC 51547 / Ice1).